The following is a 270-amino-acid chain: Tryptophan synthase alpha chain (270 aa).

Catalysis depends on proton acceptor residues Glu-51 and Asp-62.

Belongs to the TrpA family. Tetramer of two alpha and two beta chains.

It catalyses the reaction (1S,2R)-1-C-(indol-3-yl)glycerol 3-phosphate + L-serine = D-glyceraldehyde 3-phosphate + L-tryptophan + H2O. The protein operates within amino-acid biosynthesis; L-tryptophan biosynthesis; L-tryptophan from chorismate: step 5/5. In terms of biological role, the alpha subunit is responsible for the aldol cleavage of indoleglycerol phosphate to indole and glyceraldehyde 3-phosphate. In Methanothermobacter thermautotrophicus (strain ATCC 29096 / DSM 1053 / JCM 10044 / NBRC 100330 / Delta H) (Methanobacterium thermoautotrophicum), this protein is Tryptophan synthase alpha chain.